The following is a 351-amino-acid chain: MGDPERPEAAGLDQDERSSSDTNENEIKSNEEPLLRKSSRRFVIFPIQYPDIWKMYKQAQASFWTAEEVDLSKDLPHWNKLKADEKYFISHILAFFAASDGIVNENLVERFSQEVQVPEARCFYGFQILIENVHSEMYSLLIDTYIRDPKKREFLFNAIETMPYVKKKADWALRWIADRKSTFGERVVAFAAVEGVFFSGSFAAIFWLKKRGLMPGLTFSNELISRDEGLHCDFACLMFQYLVNKPSEERVREIIVDAVKIEQEFLTEALPVGLIGMNCILMKQYIEFVADRLLVELGFSKVFQAENPFDFMENISLEGKTNFFEKRVSEYQRFAVMAETTDNVFTLDADF.

The tract at residues 1-31 (MGDPERPEAAGLDQDERSSSDTNENEIKSNE) is disordered. Residues D100, E131, and H134 each contribute to the Fe cation site. The active site involves Y138. Fe cation is bound by residues E194, E228, and H231.

This sequence belongs to the ribonucleoside diphosphate reductase small chain family. As to quaternary structure, heterotetramer with large (RRM1) subunit. Interacts with p53/TP53. Interacts with RRM1 in response to DNA damage. The cofactor is Fe cation.

The protein localises to the cytoplasm. Its subcellular location is the nucleus. It catalyses the reaction a 2'-deoxyribonucleoside 5'-diphosphate + [thioredoxin]-disulfide + H2O = a ribonucleoside 5'-diphosphate + [thioredoxin]-dithiol. Its function is as follows. Plays a pivotal role in cell survival by repairing damaged DNA in a p53/TP53-dependent manner. Supplies deoxyribonucleotides for DNA repair in cells arrested at G1 or G2. Contains an iron-tyrosyl free radical center required for catalysis. Forms an active ribonucleotide reductase (RNR) complex with RRM1 which is expressed both in resting and proliferating cells in response to DNA damage. This is Ribonucleoside-diphosphate reductase subunit M2 B (RRM2B) from Pongo abelii (Sumatran orangutan).